Consider the following 254-residue polypeptide: Phosphatidylglycerol--prolipoprotein diacylglyceryl transferase (254 aa).

The next 4 helical transmembrane spans lie at 11-31 (LAIRWYGVVISIGAALGLLLA), 49-69 (FLIAFPSAIIGARLYYVIFEF), 84-104 (QGGLAIHGGIIFGVLAVYIYL), and 109-129 (ESFFEYVDVAAPSIILGQAIG). R130 provides a ligand contact to a 1,2-diacyl-sn-glycero-3-phospho-(1'-sn-glycerol). Helical transmembrane passes span 169–189 (PTFLYESIWNFIVCIFLVYLL), 196–216 (GIVFMAYIGLYSLGRFFIEGL), and 228–248 (VAQLISVLGIILSIFFIYNII).

The protein belongs to the Lgt family.

Its subcellular location is the cell membrane. The catalysed reaction is L-cysteinyl-[prolipoprotein] + a 1,2-diacyl-sn-glycero-3-phospho-(1'-sn-glycerol) = an S-1,2-diacyl-sn-glyceryl-L-cysteinyl-[prolipoprotein] + sn-glycerol 1-phosphate + H(+). It participates in protein modification; lipoprotein biosynthesis (diacylglyceryl transfer). Its function is as follows. Catalyzes the transfer of the diacylglyceryl group from phosphatidylglycerol to the sulfhydryl group of the N-terminal cysteine of a prolipoprotein, the first step in the formation of mature lipoproteins. In Clostridium botulinum (strain Langeland / NCTC 10281 / Type F), this protein is Phosphatidylglycerol--prolipoprotein diacylglyceryl transferase.